A 141-amino-acid polypeptide reads, in one-letter code: Nucleoside diphosphate kinase (141 aa).

Lys-11, Phe-59, Arg-87, Thr-93, Arg-104, and Asn-114 together coordinate ATP. The Pros-phosphohistidine intermediate role is filled by His-117.

The protein belongs to the NDK family. Homotetramer. The cofactor is Mg(2+).

The protein localises to the cytoplasm. The catalysed reaction is a 2'-deoxyribonucleoside 5'-diphosphate + ATP = a 2'-deoxyribonucleoside 5'-triphosphate + ADP. It catalyses the reaction a ribonucleoside 5'-diphosphate + ATP = a ribonucleoside 5'-triphosphate + ADP. In terms of biological role, major role in the synthesis of nucleoside triphosphates other than ATP. The ATP gamma phosphate is transferred to the NDP beta phosphate via a ping-pong mechanism, using a phosphorylated active-site intermediate. The protein is Nucleoside diphosphate kinase of Pseudomonas putida (strain ATCC 47054 / DSM 6125 / CFBP 8728 / NCIMB 11950 / KT2440).